A 279-amino-acid chain; its full sequence is Oxygen-dependent coproporphyrinogen-III oxidase (279 aa).

A substrate-binding site is contributed by S102. The a divalent metal cation site is built by H106 and H116. Catalysis depends on H116, which acts as the Proton donor. 118-120 provides a ligand contact to substrate; sequence NTR. The a divalent metal cation site is built by H149 and H179. The interval 244–279 is important for dimerization; sequence YVEFNLLYDRGTKFGLMTDGNIEAILMSLPPVVKFN.

Belongs to the aerobic coproporphyrinogen-III oxidase family. Homodimer. A divalent metal cation serves as cofactor.

It localises to the cytoplasm. The catalysed reaction is coproporphyrinogen III + O2 + 2 H(+) = protoporphyrinogen IX + 2 CO2 + 2 H2O. It functions in the pathway porphyrin-containing compound metabolism; protoporphyrin-IX biosynthesis; protoporphyrinogen-IX from coproporphyrinogen-III (O2 route): step 1/1. Its function is as follows. Involved in the heme biosynthesis. Catalyzes the aerobic oxidative decarboxylation of propionate groups of rings A and B of coproporphyrinogen-III to yield the vinyl groups in protoporphyrinogen-IX. The protein is Oxygen-dependent coproporphyrinogen-III oxidase of Rickettsia typhi (strain ATCC VR-144 / Wilmington).